Here is a 640-residue protein sequence, read N- to C-terminus: 1,4-alpha-glucan branching enzyme GlgB (640 aa).

Catalysis depends on Asp317, which acts as the Nucleophile. Glu370 functions as the Proton donor in the catalytic mechanism.

This sequence belongs to the glycosyl hydrolase 13 family. GlgB subfamily. Monomer.

It carries out the reaction Transfers a segment of a (1-&gt;4)-alpha-D-glucan chain to a primary hydroxy group in a similar glucan chain.. Its pathway is glycan biosynthesis; glycogen biosynthesis. Catalyzes the formation of the alpha-1,6-glucosidic linkages in glycogen by scission of a 1,4-alpha-linked oligosaccharide from growing alpha-1,4-glucan chains and the subsequent attachment of the oligosaccharide to the alpha-1,6 position. The protein is 1,4-alpha-glucan branching enzyme GlgB of Nitratidesulfovibrio vulgaris (strain DP4) (Desulfovibrio vulgaris).